Consider the following 223-residue polypeptide: Uracil-DNA glycosylase (223 aa).

Residue Asp-61 is the Proton acceptor of the active site.

This sequence belongs to the uracil-DNA glycosylase (UDG) superfamily. UNG family.

The protein resides in the cytoplasm. The catalysed reaction is Hydrolyzes single-stranded DNA or mismatched double-stranded DNA and polynucleotides, releasing free uracil.. In terms of biological role, excises uracil residues from the DNA which can arise as a result of misincorporation of dUMP residues by DNA polymerase or due to deamination of cytosine. This Histophilus somni (strain 129Pt) (Haemophilus somnus) protein is Uracil-DNA glycosylase.